The chain runs to 959 residues: MQESDVFHNQLRVEMLKKEEDEVENNSEKKKAPGIDMNKVNLIKTRDEDIIAENIKAELKEEEKENMKVEEEEIKEEEEKKEKENYPCMQIIDQEGIFADENQKDRITFEEFIQENTKFKELGFNYNMLSILGPQNSGKSTLLNYLFDTDFAVLNEKNGRQRTTRGVWLGLVGDRKDIIIMDLEGSDGSIREDDLSFERKISLFSLSVCSVLMVNIWSHDVGRYGASNMSLLKNIFELNLQLFQKEDSPKTLILFVIRDRDQRKPFENTKSVLLEDIMKIWESVARPECFKRAPIDKFFDLEFTSLPHFKHDKELFIQEAKELKKRFDCKNQNTYFRPIYNKEIPADGLALFTKQVWSAIKSNKDLDLPSQKEMLARFRCDELIENIFNEFEKEIEEIKLQHSEKHIFNNFKIFCDCLYDKKMKEFMNVASKYLDRVVKEKADLLSEKMLNEISYLFQTQMTLAINYIKTMLTTSYFTLKNQYITEQSSLFDPTKYAGYAEQMDDFNSTIKNEWEKISTQSVPSNIENNFEIEINTLDRFINKLYEIGRRDLIEALMTHFKKHLQNIMKPLLLPLFEQSNQNMWEQVRKVVIETTSQNLQELENGMINSLKMNKDDVEKKLNELQVYIIDAVRSTILERPGFVSNLMENKFISIFRLDDEGLPKKWKQNEDLSKPFFKAKEEAEKILDLFSYIRMDPKDDELSFISINPATGKKMIIEEPENGTIDQTKVLFSLSERLSIYEGFQNMAESNFIRAQQELAAITVHSKTPMWLILLIAFLSFDNIVYVFKSPTLLALTLIIIGIIYSLNKIGYAYLIDSVISYILSISWSSVLYLIQDLGLFKNLLPKPEAPKRKRPQKKTQDDKPKSSILLTHKKQPSVMGDVTMDNIDSLNSFDDAFKLVSQDEKPIRKPLHPLPKRETQSMKVMPMSASFTKSQSMFIKRNPTTTSSLNKIKEANEF.

The Cytoplasmic segment spans residues methionine 1 to lysine 767. A coiled-coil region spans residues asparagine 9–tyrosine 86. The disordered stretch occupies residues glutamate 62 to lysine 81. The GB1/RHD3-type G domain occupies glycine 123 to tyrosine 340. Glycine 133–serine 140 contacts GTP. Residues threonine 768–phenylalanine 788 traverse the membrane as a helical segment. Over lysine 789–proline 791 the chain is Lumenal. A helical membrane pass occupies residues threonine 792 to tyrosine 812. The Cytoplasmic portion of the chain corresponds to alanine 813 to phenylalanine 959. The tract at residues glutamate 849–serine 868 is disordered.

Belongs to the TRAFAC class dynamin-like GTPase superfamily. GB1/RHD3 GTPase family. RHD3 subfamily.

The protein localises to the endoplasmic reticulum membrane. Functionally, probable GTP-binding protein that may be involved in cell development. This is Protein SEY1 homolog 1 from Entamoeba histolytica (strain ATCC 30459 / HM-1:IMSS / ABRM).